Reading from the N-terminus, the 270-residue chain is Beta carbonic anhydrase 1 (270 aa).

Residues cysteine 39, aspartate 41, histidine 105, and cysteine 108 each coordinate Zn(2+).

Belongs to the beta-class carbonic anhydrase family. It depends on Zn(2+) as a cofactor.

It carries out the reaction hydrogencarbonate + H(+) = CO2 + H2O. Functionally, reversible hydration of carbon dioxide. In Caenorhabditis briggsae, this protein is Beta carbonic anhydrase 1.